Consider the following 859-residue polypeptide: Homeobox-leucine zipper protein HOX32 (859 aa).

A disordered region spans residues 7 to 31 (AAVHGVGRQDRSSPGGGGAPQVDTG). The homeobox DNA-binding region spans 29–92 (DTGKYVRYTP…NRRCREKQRK (64 aa)). Positions 100–129 (VNRKLTAMNKLLMEENDRLQKQVSRLVYEN) form a coiled coil. A compositionally biased stretch (polar residues) spans 146-164 (TSCESVVTSGQHHQQQNPA). Positions 146-172 (TSCESVVTSGQHHQQQNPAATRPQRDA) are disordered. The START domain maps to 171-393 (DANNPAGLLA…LRHIRQIAHE (223 aa)).

Belongs to the HD-ZIP homeobox family. Class III subfamily. In terms of tissue distribution, expressed in seedlings, roots, stems, leaf sheaths and blades and panicles.

It is found in the nucleus. Its function is as follows. Probable transcription factor. This chain is Homeobox-leucine zipper protein HOX32 (HOX32), found in Oryza sativa subsp. japonica (Rice).